The primary structure comprises 292 residues: MNVPHSVKSRADAYWRLMRFDKPIGIFLLLWPALWALWIAGEGRPDPGVAAVIVFGVVLMRAAGCVINDYADREFDPHVERTRLRPIAAGEVTSKEALILFMVLCLTAFALVLTMNWLTIALSVPGAFLAASYPFTKRYTHLPQAYLGLAFGWAIPMTFAAQTGSIPVVAWALYAATVLWALIYDTMYAMVDREDDVKIGIKSTAILFGKYDREIIGALQIAMLAILAGIGRYLGLGGLYALGLAAAAGFSVYQQVLIFRREKSKCFRAFLNNHWFGAAVFAGLFADYLWAG.

The next 8 membrane-spanning stretches (helical) occupy residues 23-43 (PIGI…AGEG), 47-67 (PGVA…GCVI), 98-118 (LILF…MNWL), 141-161 (HLPQ…TFAA), 164-184 (GSIP…ALIY), 211-231 (YDRE…AGIG), 233-253 (YLGL…FSVY), and 270-290 (FLNN…DYLW).

This sequence belongs to the UbiA prenyltransferase family. Mg(2+) serves as cofactor.

It is found in the cell inner membrane. It carries out the reaction all-trans-octaprenyl diphosphate + 4-hydroxybenzoate = 4-hydroxy-3-(all-trans-octaprenyl)benzoate + diphosphate. It functions in the pathway cofactor biosynthesis; ubiquinone biosynthesis. Catalyzes the prenylation of para-hydroxybenzoate (PHB) with an all-trans polyprenyl group. Mediates the second step in the final reaction sequence of ubiquinone-8 (UQ-8) biosynthesis, which is the condensation of the polyisoprenoid side chain with PHB, generating the first membrane-bound Q intermediate 3-octaprenyl-4-hydroxybenzoate. The sequence is that of 4-hydroxybenzoate octaprenyltransferase from Methylococcus capsulatus (strain ATCC 33009 / NCIMB 11132 / Bath).